Here is a 323-residue protein sequence, read N- to C-terminus: PI-PLC X domain-containing protein 1 (323 aa).

Residues 30 to 206 (RLWDVPLHHL…QVIVSYEDES (177 aa)) enclose the PI-PLC X-box domain.

As to expression, widely expressed.

The protein localises to the cytoplasm. The chain is PI-PLC X domain-containing protein 1 (PLCXD1) from Homo sapiens (Human).